A 333-amino-acid chain; its full sequence is DNA-directed RNA polymerase subunit alpha (333 aa).

An alpha N-terminal domain (alpha-NTD) region spans residues 1–233; that stretch reads MVREKVRVST…DLFIPFLHAE (233 aa). Positions 266 to 333 are alpha C-terminal domain (alpha-CTD); the sequence is KKEIAFKSIF…DILEIEKHFP (68 aa).

This sequence belongs to the RNA polymerase alpha chain family. In terms of assembly, in plastids the minimal PEP RNA polymerase catalytic core is composed of four subunits: alpha, beta, beta', and beta''. When a (nuclear-encoded) sigma factor is associated with the core the holoenzyme is formed, which can initiate transcription.

Its subcellular location is the plastid. The protein resides in the chloroplast. It catalyses the reaction RNA(n) + a ribonucleoside 5'-triphosphate = RNA(n+1) + diphosphate. DNA-dependent RNA polymerase catalyzes the transcription of DNA into RNA using the four ribonucleoside triphosphates as substrates. The protein is DNA-directed RNA polymerase subunit alpha of Lotus japonicus (Lotus corniculatus var. japonicus).